Here is a 327-residue protein sequence, read N- to C-terminus: uncharacterized protein (327 aa).

The S4 RNA-binding domain occupies 32-105; sequence VRLDKWLAEQ…IPLDILYEDE (74 aa). D156 is a catalytic residue.

Belongs to the pseudouridine synthase RluA family.

It catalyses the reaction a uridine in RNA = a pseudouridine in RNA. This is an uncharacterized protein from Synechocystis sp. (strain ATCC 27184 / PCC 6803 / Kazusa).